Consider the following 350-residue polypeptide: uncharacterized protein (350 aa).

A signal peptide spans 1 to 26; that stretch reads MKKSGWLVVALIALVVLGVVTSIAVN.

This is an uncharacterized protein from Archaeoglobus fulgidus (strain ATCC 49558 / DSM 4304 / JCM 9628 / NBRC 100126 / VC-16).